The primary structure comprises 490 residues: COP9 signalosome complex subunit 2 (490 aa).

A compositionally biased stretch (acidic residues) spans Met1–Asp30. The disordered stretch occupies residues Met1–Glu32. The 169-residue stretch at Ser250–Asp418 folds into the PCI domain. Residues Asp469–Tyr490 are disordered.

The protein belongs to the CSN2 family. In terms of assembly, component of the COP9 signalosome (CSN) complex.

The protein resides in the cytoplasm. Its subcellular location is the nucleus. Its function is as follows. Component of the COP9 signalosome (CSN) complex that acts as an regulator of the ubiquitin (Ubl) conjugation pathway by mediating the deneddylation of the cullin subunit of SCF-type E3 ubiquitin-protein ligase complexes. The CSN complex is involved in the regulation of the circadian clock through its control of the stability of the SCF(FWD-1) complex. The chain is COP9 signalosome complex subunit 2 (csn-2) from Neurospora crassa (strain ATCC 24698 / 74-OR23-1A / CBS 708.71 / DSM 1257 / FGSC 987).